We begin with the raw amino-acid sequence, 76 residues long: Acyl carrier protein (76 aa).

The Carrier domain occupies 1 to 76 (MSIEERVKKI…SAIDYVQNNQ (76 aa)). An O-(pantetheine 4'-phosphoryl)serine modification is found at serine 36.

Belongs to the acyl carrier protein (ACP) family. Post-translationally, 4'-phosphopantetheine is transferred from CoA to a specific serine of apo-ACP by AcpS. This modification is essential for activity because fatty acids are bound in thioester linkage to the sulfhydryl of the prosthetic group.

It is found in the cytoplasm. Its pathway is lipid metabolism; fatty acid biosynthesis. Functionally, carrier of the growing fatty acid chain in fatty acid biosynthesis. This Actinobacillus succinogenes (strain ATCC 55618 / DSM 22257 / CCUG 43843 / 130Z) protein is Acyl carrier protein.